Reading from the N-terminus, the 188-residue chain is Surfactant protein C (188 aa).

Residues 1 to 23 (MDMGSKEALMESPPDYSAAPRGR) constitute a propeptide that is removed on maturation. 2 S-palmitoyl cysteine lipidation sites follow: Cys-28 and Cys-29. Positions 59–188 (HMSQKHTEMV…LCGEVPLIYI (130 aa)) are excised as a propeptide. In terms of domain architecture, BRICHOS spans 94–188 (FPIGSTGIVT…LCGEVPLIYI (95 aa)). A disulfide bridge connects residues Cys-121 and Cys-180. Positions 144–164 (NPAEPPTQRGQDKGPAAGPAS) are disordered.

The protein resides in the secreted. It localises to the extracellular space. It is found in the surface film. In terms of biological role, pulmonary surfactant associated proteins promote alveolar stability by lowering the surface tension at the air-liquid interface in the peripheral air spaces. The protein is Surfactant protein C (SFTPC) of Oryctolagus cuniculus (Rabbit).